A 338-amino-acid polypeptide reads, in one-letter code: Lipoate-protein ligase A (338 aa).

Residues 29-216 (PATQRVLFLW…AFFAHYGERV (188 aa)) enclose the BPL/LPL catalytic domain. ATP-binding positions include Arg71, 76–79 (GAVF), and Lys134. Lys134 is a binding site for (R)-lipoate.

The protein belongs to the LplA family. As to quaternary structure, monomer.

The protein localises to the cytoplasm. The enzyme catalyses L-lysyl-[lipoyl-carrier protein] + (R)-lipoate + ATP = N(6)-[(R)-lipoyl]-L-lysyl-[lipoyl-carrier protein] + AMP + diphosphate + H(+). It functions in the pathway protein modification; protein lipoylation via exogenous pathway; protein N(6)-(lipoyl)lysine from lipoate: step 1/2. The protein operates within protein modification; protein lipoylation via exogenous pathway; protein N(6)-(lipoyl)lysine from lipoate: step 2/2. Functionally, catalyzes both the ATP-dependent activation of exogenously supplied lipoate to lipoyl-AMP and the transfer of the activated lipoyl onto the lipoyl domains of lipoate-dependent enzymes. The chain is Lipoate-protein ligase A from Salmonella typhimurium (strain LT2 / SGSC1412 / ATCC 700720).